The chain runs to 144 residues: Large ribosomal subunit protein uL13 (144 aa).

The protein belongs to the universal ribosomal protein uL13 family. In terms of assembly, part of the 50S ribosomal subunit.

Functionally, this protein is one of the early assembly proteins of the 50S ribosomal subunit, although it is not seen to bind rRNA by itself. It is important during the early stages of 50S assembly. The chain is Large ribosomal subunit protein uL13 from Lawsonia intracellularis (strain PHE/MN1-00).